Here is a 311-residue protein sequence, read N- to C-terminus: Probable manganese-dependent inorganic pyrophosphatase (311 aa).

Residues His9, Asp13, Asp15, Asp77, His99, and Asp151 each coordinate Mn(2+).

It belongs to the PPase class C family. It depends on Mn(2+) as a cofactor.

The protein localises to the cytoplasm. It catalyses the reaction diphosphate + H2O = 2 phosphate + H(+). The sequence is that of Probable manganese-dependent inorganic pyrophosphatase from Streptococcus sanguinis (strain SK36).